Here is a 116-residue protein sequence, read N- to C-terminus: MADLMKFVQDEFVTRKDFPVFGAGDTITVFYEIKEGEKTRTQFFKGVVIQRRGSGNTETFTIRKMSGAVGVERIFPVNLPALQKIEINKKGAVRRARIFYFRELTGKKAKIRDKRR.

This sequence belongs to the bacterial ribosomal protein bL19 family.

This protein is located at the 30S-50S ribosomal subunit interface and may play a role in the structure and function of the aminoacyl-tRNA binding site. The chain is Large ribosomal subunit protein bL19 from Flavobacterium psychrophilum (strain ATCC 49511 / DSM 21280 / CIP 103535 / JIP02/86).